The chain runs to 607 residues: MTLWEKVKNLPDSPGVYLYKDEKGEVIYVGKAKNLKNRVRSYFQPPEKLLPKTRVMMEKARDIEVIITSTEVEALILEQNLIKRYRPRYNILLKDDKSYPYLKITGEEFPRLLITRRVVNDGGRYFGPYPDAGALNETYKLLRSIFKFRTCTPTIFAQKKRPCLNFHIKKCSAPCAGEISREEYFKEIEMVVDFLEGRGENLIKKLKKEMAIASDNLEFERAAKLRDQILALEKILAKQKISRGQRNADVVVVANRENLGVGLIFVIRQGNLLGQKVYTFTGEMETGELLNQVLVTHYGEAKEVPVEIILSTRENLDEEFLNSWFELKFGKKPKFTVPKRGEKFELLKMALENVNFTLDEKIKLNEKKQLLNEKALMDLKEALNLPVVPRRIEGYDISHLAGTGTVASMVVFIDGEPVKGKYRRFAIRSAANDDYTAMFEAVLRRFKKYLALQEEGGADGSFEELPDLVLIDGGKGQLNAAMDALKETNLLGKFTVIALAKEQEEIFLPGKKDSLLLTQDREGLKLLQRVRDEAHRFARGYQEKKRVKTLASLLEQVEGIGPKRRKQLLNKFGSIKNLREATVEEITAVPGITREIAERLKELLEME.

Residues 12-91 form the GIY-YIG domain; it reads DSPGVYLYKD…IKRYRPRYNI (80 aa). The UVR domain maps to 200–235; sequence ENLIKKLKKEMAIASDNLEFERAAKLRDQILALEKI.

The protein belongs to the UvrC family. As to quaternary structure, interacts with UvrB in an incision complex.

It localises to the cytoplasm. The UvrABC repair system catalyzes the recognition and processing of DNA lesions. UvrC both incises the 5' and 3' sides of the lesion. The N-terminal half is responsible for the 3' incision and the C-terminal half is responsible for the 5' incision. The protein is UvrABC system protein C of Carboxydothermus hydrogenoformans (strain ATCC BAA-161 / DSM 6008 / Z-2901).